The sequence spans 507 residues: ATP synthase subunit alpha, chloroplastic (507 aa).

An ATP-binding site is contributed by G170–T177.

It belongs to the ATPase alpha/beta chains family. As to quaternary structure, F-type ATPases have 2 components, CF(1) - the catalytic core - and CF(0) - the membrane proton channel. CF(1) has five subunits: alpha(3), beta(3), gamma(1), delta(1), epsilon(1). CF(0) has four main subunits: a, b, b' and c.

The protein resides in the plastid. It localises to the chloroplast thylakoid membrane. The catalysed reaction is ATP + H2O + 4 H(+)(in) = ADP + phosphate + 5 H(+)(out). Its function is as follows. Produces ATP from ADP in the presence of a proton gradient across the membrane. The alpha chain is a regulatory subunit. The sequence is that of ATP synthase subunit alpha, chloroplastic from Acorus calamus var. americanus (American sweet flag).